Reading from the N-terminus, the 181-residue chain is Adenylate kinase (181 aa).

10–15 (GAGKGT) provides a ligand contact to ATP. An NMP region spans residues 30-59 (STGDLFRANIGEGTPLGLEAKSYIDAGKLV). Residues Thr31, Arg36, 57 to 59 (KLV), 85 to 88 (GFPR), and Gln92 contribute to the AMP site. Residues 126-132 (ARGRADD) form an LID region. ATP is bound at residue Arg127. Residues Arg129 and Arg140 each contribute to the AMP site. Gly166 serves as a coordination point for ATP.

The protein belongs to the adenylate kinase family. Monomer.

The protein localises to the cytoplasm. It catalyses the reaction AMP + ATP = 2 ADP. Its pathway is purine metabolism; AMP biosynthesis via salvage pathway; AMP from ADP: step 1/1. Its function is as follows. Catalyzes the reversible transfer of the terminal phosphate group between ATP and AMP. Plays an important role in cellular energy homeostasis and in adenine nucleotide metabolism. The sequence is that of Adenylate kinase from Corynebacterium aurimucosum (strain ATCC 700975 / DSM 44827 / CIP 107346 / CN-1) (Corynebacterium nigricans).